Consider the following 209-residue polypeptide: Protein Nef (209 aa).

G2 carries the N-myristoyl glycine; by host lipid modification. Phosphoserine; by host is present on S6. Disordered regions lie at residues 16–35 and 43–71; these read IRERIRRTPPTETGVGAVSQ and DKCGAAASSSPAANNASCEPPEEEEEVGF. Low complexity predominate over residues 47-61; sequence AAASSSPAANNASCE. The segment at 65 to 68 is acidic; interacts with host PACS1 and PACS2; stabilizes the interaction of NEF/MHC-I with host AP1M1; necessary for MHC-I internalization; that stretch reads EEEE. The interval 72 to 81 is SH3-binding; interaction with Src family tyrosine kinases; the sequence is PVRPQVPLRP. The PxxP; stabilizes the interaction of NEF/MHC-I with host AP1M1; necessary for MHC-I internalization signature appears at 75 to 78; the sequence is PQVP. The interval 111-127 is mediates dimerization, Nef-PTE1 interaction; that stretch reads EILDLWVYHTQGYFPDW. A binding to ATP6V1H region spans residues 151–183; sequence MSPEEVEEANEGENNCLLHPISQHGMEDAEREV. The Dileucine internalization motif; necessary for CD4 internalization motif lies at 167–168; the sequence is LL. The Diacidic; necessary for CD4 internalization motif lies at 177-178; sequence ED.

Belongs to the lentivirus primate group Nef protein family. In terms of assembly, monomer; cytosolic form. Homodimer; membrane bound form. Interacts with Nef associated p21-activated kinase (PAK2); this interaction activates PAK2. Associates with the Nef-MHC-I-AP1 complex; this complex is required for MHC-I internalization. Interacts (via C-terminus) with host PI3-kinase. Interacts with host PACS1; this interaction seems to be weak. Interacts with host PACS2. Interacts with host LCK and MAPK3; these interactions inhibit the kinase activity of the latter. Interacts with host ATP6V1H; this interaction may play a role in CD4 endocytosis. Associates with the CD4-Nef-AP2 complex; this complex is required for CD4 internalization. Interacts with host AP2 subunit alpha and AP2 subunit sigma2. Interacts with TCR-zeta chain; this interaction up-regulates the Fas ligand (FasL) surface expression. Interacts with host HCK, LYN, and SRC; these interactions activate the Src family kinases. Interacts with MAP3K5; this interaction inhibits the Fas and TNFR-mediated death signals. Interacts with beta-COP and PTE1. Interacts with human RACK1; this increases Nef phosphorylation by PKC. Interacts with TP53; this interaction decreases the half-life of TP53, protecting the infected cell against p53-mediated apoptosis. Post-translationally, the virion-associated Nef proteins are cleaved by the viral protease to release the soluble C-terminal core protein. Nef is probably cleaved concomitantly with viral structural proteins on maturation of virus particles. Myristoylated. In terms of processing, phosphorylated on serine residues, probably by host PKCdelta and theta.

The protein localises to the host cell membrane. The protein resides in the virion. Its subcellular location is the secreted. It localises to the host Golgi apparatus membrane. Its function is as follows. Factor of infectivity and pathogenicity, required for optimal virus replication. Alters numerous pathways of T-lymphocyte function and down-regulates immunity surface molecules in order to evade host defense and increase viral infectivity. Alters the functionality of other immunity cells, like dendritic cells, monocytes/macrophages and NK cells. In infected CD4(+) T-lymphocytes, down-regulates the surface MHC-I, mature MHC-II, CD4, CD28, CCR5 and CXCR4 molecules. Mediates internalization and degradation of host CD4 through the interaction of with the cytoplasmic tail of CD4, the recruitment of AP-2 (clathrin adapter protein complex 2), internalization through clathrin coated pits, and subsequent transport to endosomes and lysosomes for degradation. Diverts host MHC-I molecules to the trans-Golgi network-associated endosomal compartments by an endocytic pathway to finally target them for degradation. MHC-I down-regulation may involve AP-1 (clathrin adapter protein complex 1) or possibly Src family kinase-ZAP70/Syk-PI3K cascade recruited by PACS2. In consequence infected cells are masked for immune recognition by cytotoxic T-lymphocytes. Decreasing the number of immune receptors also prevents reinfection by more HIV particles (superinfection). Down-regulates host SERINC3 and SERINC5 thereby excluding these proteins from the viral particles. Virion infectivity is drastically higher when SERINC3 or SERINC5 are excluded from the viral envelope, because these host antiviral proteins impair the membrane fusion event necessary for subsequent virion penetration. In terms of biological role, bypasses host T-cell signaling by inducing a transcriptional program nearly identical to that of anti-CD3 cell activation. Interaction with TCR-zeta chain up-regulates the Fas ligand (FasL). Increasing surface FasL molecules and decreasing surface MHC-I molecules on infected CD4(+) cells send attacking cytotoxic CD8+ T-lymphocytes into apoptosis. Functionally, plays a role in optimizing the host cell environment for viral replication without causing cell death by apoptosis. Protects the infected cells from apoptosis in order to keep them alive until the next virus generation is ready to strike. Inhibits the Fas and TNFR-mediated death signals by blocking MAP3K5/ASK1. Decreases the half-life of TP53, protecting the infected cell against p53-mediated apoptosis. Inhibits the apoptotic signals regulated by the Bcl-2 family proteins through the formation of a Nef/PI3-kinase/PAK2 complex that leads to activation of PAK2 and induces phosphorylation of host BAD. Its function is as follows. Extracellular Nef protein targets CD4(+) T-lymphocytes for apoptosis by interacting with CXCR4 surface receptors. The polypeptide is Protein Nef (Human immunodeficiency virus type 1 group M subtype A (isolate MAL) (HIV-1)).